Reading from the N-terminus, the 692-residue chain is Glycogen phosphorylase (692 aa).

K586 carries the N6-(pyridoxal phosphate)lysine modification.

It belongs to the glycogen phosphorylase family. It depends on pyridoxal 5'-phosphate as a cofactor.

It carries out the reaction [(1-&gt;4)-alpha-D-glucosyl](n) + phosphate = [(1-&gt;4)-alpha-D-glucosyl](n-1) + alpha-D-glucose 1-phosphate. Its function is as follows. Phosphorylase is an important allosteric enzyme in carbohydrate metabolism. Enzymes from different sources differ in their regulatory mechanisms and in their natural substrates. However, all known phosphorylases share catalytic and structural properties. The sequence is that of Glycogen phosphorylase (glgP) from Aquifex aeolicus (strain VF5).